We begin with the raw amino-acid sequence, 213 residues long: Pyrrolidone-carboxylate peptidase (213 aa).

Residues Glu78, Cys141, and His165 contribute to the active site.

Belongs to the peptidase C15 family. In terms of assembly, homotetramer.

The protein resides in the cytoplasm. It catalyses the reaction Release of an N-terminal pyroglutamyl group from a polypeptide, the second amino acid generally not being Pro.. Removes 5-oxoproline from various penultimate amino acid residues except L-proline. This is Pyrrolidone-carboxylate peptidase from Clostridium botulinum (strain Alaska E43 / Type E3).